Consider the following 238-residue polypeptide: Small ribosomal subunit protein eS4 (238 aa).

The 64-residue stretch at 38 to 101 folds into the S4 RNA-binding domain; sequence LPLALIIRDV…GEVYRVVPDA (64 aa).

It belongs to the eukaryotic ribosomal protein eS4 family.

The chain is Small ribosomal subunit protein eS4 from Pyrobaculum aerophilum (strain ATCC 51768 / DSM 7523 / JCM 9630 / CIP 104966 / NBRC 100827 / IM2).